The following is a 359-amino-acid chain: L-seryl-tRNA(Sec) kinase (359 aa).

Position 25–32 (25–32 (GLPAAGKS)) interacts with ATP.

It belongs to the L-seryl-tRNA(Sec) kinase family. Mg(2+) serves as cofactor.

The catalysed reaction is L-seryl-tRNA(Sec) + ATP = O-phospho-L-seryl-tRNA(Sec) + ADP. Its pathway is aminoacyl-tRNA biosynthesis; selenocysteinyl-tRNA(Sec) biosynthesis; selenocysteinyl-tRNA(Sec) from L-seryl-tRNA(Sec) (archaeal/eukaryal route): step 1/2. In terms of biological role, specifically phosphorylates seryl-tRNA(Sec) to O-phosphoseryl-tRNA(Sec), an activated intermediate for selenocysteine biosynthesis. No activity with other tRNAs has been detected. The sequence is that of L-seryl-tRNA(Sec) kinase (Pstk) from Mus musculus (Mouse).